Reading from the N-terminus, the 200-residue chain is Pyridoxine/pyridoxamine 5'-phosphate oxidase (200 aa).

Residues 49 to 54, 64 to 65, Arg70, Lys71, and Gln93 contribute to the FMN site; these read RMLLLK and YT. Lys54 serves as a coordination point for substrate. 3 residues coordinate substrate: Tyr111, Arg115, and Ser119. FMN contacts are provided by residues 128–129 and Trp173; that span reads QS. Substrate is bound at residue 179–181; the sequence is RLH. An FMN-binding site is contributed by Arg183.

The protein belongs to the pyridoxamine 5'-phosphate oxidase family. Homodimer. It depends on FMN as a cofactor.

It carries out the reaction pyridoxamine 5'-phosphate + O2 + H2O = pyridoxal 5'-phosphate + H2O2 + NH4(+). The enzyme catalyses pyridoxine 5'-phosphate + O2 = pyridoxal 5'-phosphate + H2O2. It functions in the pathway cofactor metabolism; pyridoxal 5'-phosphate salvage; pyridoxal 5'-phosphate from pyridoxamine 5'-phosphate: step 1/1. It participates in cofactor metabolism; pyridoxal 5'-phosphate salvage; pyridoxal 5'-phosphate from pyridoxine 5'-phosphate: step 1/1. Its function is as follows. Catalyzes the oxidation of either pyridoxine 5'-phosphate (PNP) or pyridoxamine 5'-phosphate (PMP) into pyridoxal 5'-phosphate (PLP). This is Pyridoxine/pyridoxamine 5'-phosphate oxidase from Gluconobacter oxydans (strain 621H) (Gluconobacter suboxydans).